A 333-amino-acid chain; its full sequence is Beta-ketoacyl-[acyl-carrier-protein] synthase III (333 aa).

Active-site residues include Cys116 and His258. The tract at residues 259–263 (QANKR) is ACP-binding. Asn288 is an active-site residue.

The protein belongs to the thiolase-like superfamily. FabH family. In terms of assembly, homodimer.

It localises to the cytoplasm. It carries out the reaction malonyl-[ACP] + acetyl-CoA + H(+) = 3-oxobutanoyl-[ACP] + CO2 + CoA. Its pathway is lipid metabolism; fatty acid biosynthesis. Catalyzes the condensation reaction of fatty acid synthesis by the addition to an acyl acceptor of two carbons from malonyl-ACP. Catalyzes the first condensation reaction which initiates fatty acid synthesis and may therefore play a role in governing the total rate of fatty acid production. Possesses both acetoacetyl-ACP synthase and acetyl transacylase activities. Its substrate specificity determines the biosynthesis of branched-chain and/or straight-chain of fatty acids. The polypeptide is Beta-ketoacyl-[acyl-carrier-protein] synthase III (Koribacter versatilis (strain Ellin345)).